Here is a 274-residue protein sequence, read N- to C-terminus: NH(3)-dependent NAD(+) synthetase (274 aa).

46-53 (GISGGQDS) provides a ligand contact to ATP. Asp52 is a binding site for Mg(2+). Arg140 provides a ligand contact to deamido-NAD(+). Thr160 is an ATP binding site. Glu165 provides a ligand contact to Mg(2+). 2 residues coordinate deamido-NAD(+): Lys173 and Asp180. Residues Lys189 and Thr211 each coordinate ATP. A deamido-NAD(+)-binding site is contributed by 260–261 (HK).

The protein belongs to the NAD synthetase family. Homodimer.

The catalysed reaction is deamido-NAD(+) + NH4(+) + ATP = AMP + diphosphate + NAD(+) + H(+). Its pathway is cofactor biosynthesis; NAD(+) biosynthesis; NAD(+) from deamido-NAD(+) (ammonia route): step 1/1. Catalyzes the ATP-dependent amidation of deamido-NAD to form NAD. Uses ammonia as a nitrogen source. The polypeptide is NH(3)-dependent NAD(+) synthetase (Streptococcus pyogenes serotype M2 (strain MGAS10270)).